Consider the following 132-residue polypeptide: Small ribosomal subunit protein uS8 (132 aa).

This sequence belongs to the universal ribosomal protein uS8 family. Part of the 30S ribosomal subunit. Contacts proteins S5 and S12.

Its function is as follows. One of the primary rRNA binding proteins, it binds directly to 16S rRNA central domain where it helps coordinate assembly of the platform of the 30S subunit. The protein is Small ribosomal subunit protein uS8 of Rickettsia rickettsii (strain Sheila Smith).